Consider the following 188-residue polypeptide: Inactive cysteine S-methyltransferase OspZ (188 aa).

The protein belongs to the NleE/OspZ family.

The protein localises to the secreted. It is found in the host cytoplasm. It localises to the host nucleus. In terms of biological role, inactive effector protein: in contrast to other members of the family, does not have the ability to inhibit host cell NF-kappa-B activation. Probably lacks cysteine S-methyltransferase activity due to its inability to bind S-adenosyl-L-methionine at the C-terminus. The protein is Inactive cysteine S-methyltransferase OspZ of Shigella flexneri.